The following is a 113-amino-acid chain: UPF0122 protein LAF_1235 (113 aa).

The protein belongs to the UPF0122 family.

In terms of biological role, might take part in the signal recognition particle (SRP) pathway. This is inferred from the conservation of its genetic proximity to ftsY/ffh. May be a regulatory protein. The chain is UPF0122 protein LAF_1235 from Limosilactobacillus fermentum (strain NBRC 3956 / LMG 18251) (Lactobacillus fermentum).